We begin with the raw amino-acid sequence, 279 residues long: Zinc-finger homeodomain protein 1 (279 aa).

Residues 1-13 (MDFDDHDDGDEEM) show a composition bias toward acidic residues. The interval 1 to 47 (MDFDDHDDGDEEMPPMPVSSSYETPPQHGLAGGGMAPKPPGEIGSRV) is disordered. The ZF-HD dimerization-type; degenerate zinc finger occupies 57 to 106 (YRECLKNHAVGIGGHAVDGCGEFMAAGEEGTIDALRCAACNCHRNFHRKE). The disordered stretch occupies residues 168–190 (RPLALPSTSHSGRDDGDDLSGMV). The homeobox DNA-binding region spans 215–278 (KKRFRTKFTQ…NNKHTLGKKL (64 aa)).

As to quaternary structure, homo- and heterodimer with other ZFHD proteins.

It localises to the nucleus. Functionally, putative transcription factor. The chain is Zinc-finger homeodomain protein 1 (ZHD1) from Oryza sativa subsp. japonica (Rice).